The sequence spans 150 residues: D-aminoacyl-tRNA deacylase (150 aa).

The Gly-cisPro motif, important for rejection of L-amino acids motif lies at 138–139 (GP).

The protein belongs to the DTD family. Homodimer.

Its subcellular location is the cytoplasm. The catalysed reaction is glycyl-tRNA(Ala) + H2O = tRNA(Ala) + glycine + H(+). It catalyses the reaction a D-aminoacyl-tRNA + H2O = a tRNA + a D-alpha-amino acid + H(+). An aminoacyl-tRNA editing enzyme that deacylates mischarged D-aminoacyl-tRNAs. Also deacylates mischarged glycyl-tRNA(Ala), protecting cells against glycine mischarging by AlaRS. Acts via tRNA-based rather than protein-based catalysis; rejects L-amino acids rather than detecting D-amino acids in the active site. By recycling D-aminoacyl-tRNA to D-amino acids and free tRNA molecules, this enzyme counteracts the toxicity associated with the formation of D-aminoacyl-tRNA entities in vivo and helps enforce protein L-homochirality. The polypeptide is D-aminoacyl-tRNA deacylase (Parabacteroides distasonis (strain ATCC 8503 / DSM 20701 / CIP 104284 / JCM 5825 / NCTC 11152)).